We begin with the raw amino-acid sequence, 281 residues long: Digeranylgeranylglyceryl phosphate synthase (281 aa).

Transmembrane regions (helical) follow at residues 14 to 34 (AMAAFAGLIGVLIAYNILSSA), 38 to 58 (VSLSLFDTSLIFAIVFLVTGA), 95 to 115 (LFLFITGITLAFLVNPLCGII), 149 to 169 (FLFGGAVFGMAGLQALVVLFL), 207 to 227 (ASYIAAAFGFTAMLASPVPYL), 235 to 255 (YLFVVAIADIFFLIAVYQILG), and 259 to 279 (AARSSKLFKFAMLFALISFIV).

The protein belongs to the UbiA prenyltransferase family. DGGGP synthase subfamily. Mg(2+) serves as cofactor.

It is found in the cell membrane. It catalyses the reaction sn-3-O-(geranylgeranyl)glycerol 1-phosphate + (2E,6E,10E)-geranylgeranyl diphosphate = 2,3-bis-O-(geranylgeranyl)-sn-glycerol 1-phosphate + diphosphate. Its pathway is membrane lipid metabolism; glycerophospholipid metabolism. Functionally, prenyltransferase that catalyzes the transfer of the geranylgeranyl moiety of geranylgeranyl diphosphate (GGPP) to the C2 hydroxyl of (S)-3-O-geranylgeranylglyceryl phosphate (GGGP). This reaction is the second ether-bond-formation step in the biosynthesis of archaeal membrane lipids. This chain is Digeranylgeranylglyceryl phosphate synthase, found in Methanococcoides burtonii (strain DSM 6242 / NBRC 107633 / OCM 468 / ACE-M).